The chain runs to 243 residues: Phosphoadenosine 5'-phosphosulfate reductase (243 aa).

Cys-239 (nucleophile; cysteine thiosulfonate intermediate) is an active-site residue.

It belongs to the PAPS reductase family. CysH subfamily.

The protein localises to the cytoplasm. It carries out the reaction [thioredoxin]-disulfide + sulfite + adenosine 3',5'-bisphosphate + 2 H(+) = [thioredoxin]-dithiol + 3'-phosphoadenylyl sulfate. It functions in the pathway sulfur metabolism; hydrogen sulfide biosynthesis; sulfite from sulfate: step 3/3. Its function is as follows. Catalyzes the formation of sulfite from phosphoadenosine 5'-phosphosulfate (PAPS) using thioredoxin as an electron donor. In Proteus mirabilis (strain HI4320), this protein is Phosphoadenosine 5'-phosphosulfate reductase.